The following is a 120-amino-acid chain: Large ribosomal subunit protein bL20 (120 aa).

Belongs to the bacterial ribosomal protein bL20 family.

In terms of biological role, binds directly to 23S ribosomal RNA and is necessary for the in vitro assembly process of the 50S ribosomal subunit. It is not involved in the protein synthesizing functions of that subunit. This is Large ribosomal subunit protein bL20 from Xanthobacter autotrophicus (strain ATCC BAA-1158 / Py2).